The following is a 130-amino-acid chain: Small ribosomal subunit protein uS11 (130 aa).

It belongs to the universal ribosomal protein uS11 family. Part of the 30S ribosomal subunit. Interacts with proteins S7 and S18. Binds to IF-3.

Functionally, located on the platform of the 30S subunit, it bridges several disparate RNA helices of the 16S rRNA. Forms part of the Shine-Dalgarno cleft in the 70S ribosome. The polypeptide is Small ribosomal subunit protein uS11 (Rippkaea orientalis (strain PCC 8801 / RF-1) (Cyanothece sp. (strain PCC 8801))).